A 352-amino-acid chain; its full sequence is Protein-glutamate methylesterase/protein-glutamine glutaminase (352 aa).

The region spanning 4-121 (RVLIVDDSAT…YDGIDEIQKE (118 aa)) is the Response regulatory domain. At Asp-55 the chain carries 4-aspartylphosphate. A CheB-type methylesterase domain is found at 159–351 (AQTTNKLIAI…VKIASLLSER (193 aa)). Residues Ser-171, His-197, and Asp-293 contribute to the active site.

It belongs to the CheB family. Post-translationally, phosphorylated by CheA. Phosphorylation of the N-terminal regulatory domain activates the methylesterase activity.

The protein localises to the cytoplasm. The enzyme catalyses [protein]-L-glutamate 5-O-methyl ester + H2O = L-glutamyl-[protein] + methanol + H(+). The catalysed reaction is L-glutaminyl-[protein] + H2O = L-glutamyl-[protein] + NH4(+). Functionally, involved in chemotaxis. Part of a chemotaxis signal transduction system that modulates chemotaxis in response to various stimuli. Catalyzes the demethylation of specific methylglutamate residues introduced into the chemoreceptors (methyl-accepting chemotaxis proteins or MCP) by CheR. Also mediates the irreversible deamidation of specific glutamine residues to glutamic acid. In Sulfurimonas denitrificans (strain ATCC 33889 / DSM 1251) (Thiomicrospira denitrificans (strain ATCC 33889 / DSM 1251)), this protein is Protein-glutamate methylesterase/protein-glutamine glutaminase.